The following is a 445-amino-acid chain: 3-phosphoshikimate 1-carboxyvinyltransferase (445 aa).

3-phosphoshikimate-binding residues include K28, S29, and R33. Residue K28 coordinates phosphoenolpyruvate. G101 and R129 together coordinate phosphoenolpyruvate. 3-phosphoshikimate is bound by residues S175, Q177, D328, and K355. Q177 is a phosphoenolpyruvate binding site. D328 acts as the Proton acceptor in catalysis. Positions 359 and 402 each coordinate phosphoenolpyruvate.

Belongs to the EPSP synthase family. As to quaternary structure, monomer.

The protein localises to the cytoplasm. The enzyme catalyses 3-phosphoshikimate + phosphoenolpyruvate = 5-O-(1-carboxyvinyl)-3-phosphoshikimate + phosphate. The protein operates within metabolic intermediate biosynthesis; chorismate biosynthesis; chorismate from D-erythrose 4-phosphate and phosphoenolpyruvate: step 6/7. Its function is as follows. Catalyzes the transfer of the enolpyruvyl moiety of phosphoenolpyruvate (PEP) to the 5-hydroxyl of shikimate-3-phosphate (S3P) to produce enolpyruvyl shikimate-3-phosphate and inorganic phosphate. This is 3-phosphoshikimate 1-carboxyvinyltransferase from Rhodopseudomonas palustris (strain HaA2).